We begin with the raw amino-acid sequence, 153 residues long: Spanin, inner membrane subunit (153 aa).

Topologically, residues methionine 1–arginine 3 are cytoplasmic. A helical; Signal-anchor for type II membrane protein membrane pass occupies residues valine 4–asparagine 24. At histidine 25–arginine 153 the chain is on the periplasmic side. Positions aspartate 65–arginine 92 form a coiled coil.

The protein belongs to the Lambdavirus i-spanin family. Homodimer; disulfide-linked. Interacts (via C-terminus) with the spanin outer lipoprotein subunit (via C-terminus). Part of the spanin complex which spans the entire periplasmic space. The spanin complex is composed of one homodimer of the i-spanin linked by intermolecular disulfide bonds involving two Cys residues and one homodimer of the o-spanin covalently linked by an intermolecular disulfide bond involving one Cys.

It localises to the host cell inner membrane. In terms of biological role, component of the spanin complex that disrupts the host outer membrane and participates in cell lysis during virus exit. The spanin complex conducts the final step in host lysis by disrupting the outer membrane after holin and endolysin have permeabilized the inner membrane and degraded the host peptidoglycans. Host outer membrane disruption is due to local fusion between the inner and outer membrane performed by the spanin complex. The polypeptide is Spanin, inner membrane subunit (Rz) (Escherichia phage lambda (Bacteriophage lambda)).